The chain runs to 207 residues: Small ribosomal subunit protein uS4 (207 aa).

The tract at residues 31 to 53 (KAKFDSKPGQHGRTSGARTSDYG) is disordered. In terms of domain architecture, S4 RNA-binding spans 97-157 (CRLDNVVYRM…EKSKKQARIV (61 aa)).

The protein belongs to the universal ribosomal protein uS4 family. As to quaternary structure, part of the 30S ribosomal subunit. Contacts protein S5. The interaction surface between S4 and S5 is involved in control of translational fidelity.

Functionally, one of the primary rRNA binding proteins, it binds directly to 16S rRNA where it nucleates assembly of the body of the 30S subunit. With S5 and S12 plays an important role in translational accuracy. The sequence is that of Small ribosomal subunit protein uS4 from Acidovorax ebreus (strain TPSY) (Diaphorobacter sp. (strain TPSY)).